We begin with the raw amino-acid sequence, 177 residues long: Translation initiation factor IF-3 (177 aa).

It belongs to the IF-3 family. In terms of assembly, monomer.

Its subcellular location is the cytoplasm. Functionally, IF-3 binds to the 30S ribosomal subunit and shifts the equilibrium between 70S ribosomes and their 50S and 30S subunits in favor of the free subunits, thus enhancing the availability of 30S subunits on which protein synthesis initiation begins. The polypeptide is Translation initiation factor IF-3 (Clostridium perfringens (strain 13 / Type A)).